Here is a 60-residue protein sequence, read N- to C-terminus: Large ribosomal subunit protein bL32 (60 aa).

This sequence belongs to the bacterial ribosomal protein bL32 family.

This chain is Large ribosomal subunit protein bL32, found in Desulfovibrio desulfuricans (strain ATCC 27774 / DSM 6949 / MB).